The following is a 141-amino-acid chain: VLSPADKTNVKATWDKIGGHAGEYGGEALERTFTAFPTTKTYFPHFDLSHGSAQVKAHGKKVADALTTAVAHMDDLPGALSALSDLHAHKLRVDPVNFKLLSHCLLVTLACHHPADFTPAVHASLDKFFSAVSTVLTSKYR.

Residues 1-141 (VLSPADKTNV…VSTVLTSKYR (141 aa)) form the Globin domain. Phosphoserine is present on S3. K7 is subject to N6-succinyllysine. T8 carries the phosphothreonine modification. N6-succinyllysine is present on K11. K16 carries the N6-acetyllysine; alternate modification. K16 carries the post-translational modification N6-succinyllysine; alternate. Residue Y24 is modified to Phosphotyrosine. The residue at position 40 (K40) is an N6-succinyllysine. Position 49 is a phosphoserine (S49). Residue H58 participates in O2 binding. H87 is a heme b binding site. S102 bears the Phosphoserine mark. T108 bears the Phosphothreonine mark. A Phosphoserine modification is found at S124. 2 positions are modified to phosphothreonine: T134 and T137. The residue at position 138 (S138) is a Phosphoserine.

The protein belongs to the globin family. Heterotetramer of two alpha chains and two beta chains. As to expression, red blood cells.

In terms of biological role, involved in oxygen transport from the lung to the various peripheral tissues. Its function is as follows. Hemopressin acts as an antagonist peptide of the cannabinoid receptor CNR1. Hemopressin-binding efficiently blocks cannabinoid receptor CNR1 and subsequent signaling. This Phoca vitulina (Harbor seal) protein is Hemoglobin subunit alpha (HBA).